Consider the following 112-residue polypeptide: UPF0235 protein RHE_CH03912 (112 aa).

It belongs to the UPF0235 family.

This chain is UPF0235 protein RHE_CH03912, found in Rhizobium etli (strain ATCC 51251 / DSM 11541 / JCM 21823 / NBRC 15573 / CFN 42).